A 278-amino-acid chain; its full sequence is Elongation factor Ts (278 aa).

The segment at 79–82 is involved in Mg(2+) ion dislocation from EF-Tu; it reads TDFV.

The protein belongs to the EF-Ts family.

The protein resides in the cytoplasm. Its function is as follows. Associates with the EF-Tu.GDP complex and induces the exchange of GDP to GTP. It remains bound to the aminoacyl-tRNA.EF-Tu.GTP complex up to the GTP hydrolysis stage on the ribosome. The sequence is that of Elongation factor Ts from Borrelia recurrentis (strain A1).